The chain runs to 294 residues: tRNA pseudouridine synthase B (294 aa).

Aspartate 39 functions as the Nucleophile in the catalytic mechanism.

Belongs to the pseudouridine synthase TruB family. Type 1 subfamily.

It carries out the reaction uridine(55) in tRNA = pseudouridine(55) in tRNA. Functionally, responsible for synthesis of pseudouridine from uracil-55 in the psi GC loop of transfer RNAs. In Streptococcus pyogenes serotype M5 (strain Manfredo), this protein is tRNA pseudouridine synthase B.